The chain runs to 387 residues: 2-alkyl-3-oxoalkanoate reductase (387 aa).

The active-site Proton acceptor is the Tyr-190. An NADP(+)-binding site is contributed by Lys-194.

Belongs to the 3-beta-HSD family.

The enzyme catalyses a (2R,3S)-2-alkyl-3-hydroxyalkanoate + NADP(+) = an (R)-2-alkyl-3-oxoalkanoate + NADPH + H(+). Involved in olefin biosynthesis. Catalyzes the reversible stereospecific NADPH-dependent reduction of 2-alkyl-3-oxoalkanoic acids to 2-alkyl-3-hydroxyalkanoic acids. The S.oneidensis oleABCD genes produce 3,6,9,12,15,19,22,25,28-hentriacontanonaene, which may aid the cells in adapting to a sudden drop in temperature. The sequence is that of 2-alkyl-3-oxoalkanoate reductase from Shewanella oneidensis (strain ATCC 700550 / JCM 31522 / CIP 106686 / LMG 19005 / NCIMB 14063 / MR-1).